Reading from the N-terminus, the 230-residue chain is Ribose-5-phosphate isomerase A (230 aa).

Substrate is bound by residues Thr-32 to Thr-35, Asp-85 to Asp-88, and Lys-98 to Gly-101. Catalysis depends on Glu-107, which acts as the Proton acceptor. Residue Lys-125 coordinates substrate.

This sequence belongs to the ribose 5-phosphate isomerase family. As to quaternary structure, homodimer.

It carries out the reaction aldehydo-D-ribose 5-phosphate = D-ribulose 5-phosphate. It participates in carbohydrate degradation; pentose phosphate pathway; D-ribose 5-phosphate from D-ribulose 5-phosphate (non-oxidative stage): step 1/1. In terms of biological role, catalyzes the reversible conversion of ribose-5-phosphate to ribulose 5-phosphate. This is Ribose-5-phosphate isomerase A from Burkholderia ambifaria (strain MC40-6).